The sequence spans 142 residues: Hemoglobin subunit alpha-4 (142 aa).

The Globin domain maps to 2 to 142; it reads TLTDSDKAAI…VATVLTSKYR (141 aa). His59 contributes to the O2 binding site. His88 contributes to the heme b binding site.

Belongs to the globin family. Heterotetramer of two alpha chains and two beta chains. Red blood cells.

Its function is as follows. This is a larval (tadpole) alpha-globin. The sequence is that of Hemoglobin subunit alpha-4 (hba4) from Xenopus laevis (African clawed frog).